The primary structure comprises 181 residues: Adenine phosphoribosyltransferase (181 aa).

It belongs to the purine/pyrimidine phosphoribosyltransferase family. In terms of assembly, homodimer.

Its subcellular location is the cytoplasm. It catalyses the reaction AMP + diphosphate = 5-phospho-alpha-D-ribose 1-diphosphate + adenine. It functions in the pathway purine metabolism; AMP biosynthesis via salvage pathway; AMP from adenine: step 1/1. Its function is as follows. Catalyzes a salvage reaction resulting in the formation of AMP, that is energically less costly than de novo synthesis. In Methylobacterium sp. (strain 4-46), this protein is Adenine phosphoribosyltransferase.